The sequence spans 375 residues: Cobalt-precorrin-5B C(1)-methyltransferase (375 aa).

Belongs to the CbiD family.

The enzyme catalyses Co-precorrin-5B + S-adenosyl-L-methionine = Co-precorrin-6A + S-adenosyl-L-homocysteine. Its pathway is cofactor biosynthesis; adenosylcobalamin biosynthesis; cob(II)yrinate a,c-diamide from sirohydrochlorin (anaerobic route): step 6/10. Its function is as follows. Catalyzes the methylation of C-1 in cobalt-precorrin-5B to form cobalt-precorrin-6A. This chain is Cobalt-precorrin-5B C(1)-methyltransferase, found in Fusobacterium nucleatum subsp. nucleatum (strain ATCC 25586 / DSM 15643 / BCRC 10681 / CIP 101130 / JCM 8532 / KCTC 2640 / LMG 13131 / VPI 4355).